Reading from the N-terminus, the 233-residue chain is Uracil-DNA glycosylase (233 aa).

D70 serves as the catalytic Proton acceptor.

Belongs to the uracil-DNA glycosylase (UDG) superfamily. UNG family.

It is found in the cytoplasm. It carries out the reaction Hydrolyzes single-stranded DNA or mismatched double-stranded DNA and polynucleotides, releasing free uracil.. In terms of biological role, excises uracil residues from the DNA which can arise as a result of misincorporation of dUMP residues by DNA polymerase or due to deamination of cytosine. In Helicobacter pylori (strain HPAG1), this protein is Uracil-DNA glycosylase.